A 477-amino-acid chain; its full sequence is Glycogen synthase (477 aa).

Lys15 provides a ligand contact to ADP-alpha-D-glucose.

This sequence belongs to the glycosyltransferase 1 family. Bacterial/plant glycogen synthase subfamily.

The catalysed reaction is [(1-&gt;4)-alpha-D-glucosyl](n) + ADP-alpha-D-glucose = [(1-&gt;4)-alpha-D-glucosyl](n+1) + ADP + H(+). It functions in the pathway glycan biosynthesis; glycogen biosynthesis. Functionally, synthesizes alpha-1,4-glucan chains using ADP-glucose. The chain is Glycogen synthase from Klebsiella pneumoniae (strain 342).